A 363-amino-acid polypeptide reads, in one-letter code: NAD(P)H-quinone oxidoreductase subunit 1, chloroplastic (363 aa).

Transmembrane regions (helical) follow at residues 30–50 (LVPI…IVWL), 98–118 (FSIG…VIPF), 127–147 (LSIG…GLLM), 165–185 (AAQS…ISLL), 203–223 (FWGW…ISSL), 248–268 (YSGI…LVSS), 300–320 (VFGT…FLFI), and 336–356 (LLNL…LLTT).

The protein belongs to the complex I subunit 1 family. In terms of assembly, NDH is composed of at least 16 different subunits, 5 of which are encoded in the nucleus.

The protein resides in the plastid. Its subcellular location is the chloroplast thylakoid membrane. It catalyses the reaction a plastoquinone + NADH + (n+1) H(+)(in) = a plastoquinol + NAD(+) + n H(+)(out). The enzyme catalyses a plastoquinone + NADPH + (n+1) H(+)(in) = a plastoquinol + NADP(+) + n H(+)(out). Functionally, NDH shuttles electrons from NAD(P)H:plastoquinone, via FMN and iron-sulfur (Fe-S) centers, to quinones in the photosynthetic chain and possibly in a chloroplast respiratory chain. The immediate electron acceptor for the enzyme in this species is believed to be plastoquinone. Couples the redox reaction to proton translocation, and thus conserves the redox energy in a proton gradient. In Solanum bulbocastanum (Wild potato), this protein is NAD(P)H-quinone oxidoreductase subunit 1, chloroplastic.